The chain runs to 474 residues: tRNA-2-methylthio-N(6)-dimethylallyladenosine synthase (474 aa).

Residues 3 to 120 (QKLHIKTWGC…LPEMINQIRG (118 aa)) enclose the MTTase N-terminal domain. The [4Fe-4S] cluster site is built by Cys-12, Cys-49, Cys-83, Cys-157, Cys-161, and Cys-164. The Radical SAM core domain occupies 143–375 (RAEGPTAFVS…QERINQQAAQ (233 aa)). The region spanning 378-441 (RRMLGTEQRV…TNSLRGEVVR (64 aa)) is the TRAM domain.

The protein belongs to the methylthiotransferase family. MiaB subfamily. Monomer. [4Fe-4S] cluster is required as a cofactor.

Its subcellular location is the cytoplasm. It carries out the reaction N(6)-dimethylallyladenosine(37) in tRNA + (sulfur carrier)-SH + AH2 + 2 S-adenosyl-L-methionine = 2-methylsulfanyl-N(6)-dimethylallyladenosine(37) in tRNA + (sulfur carrier)-H + 5'-deoxyadenosine + L-methionine + A + S-adenosyl-L-homocysteine + 2 H(+). Catalyzes the methylthiolation of N6-(dimethylallyl)adenosine (i(6)A), leading to the formation of 2-methylthio-N6-(dimethylallyl)adenosine (ms(2)i(6)A) at position 37 in tRNAs that read codons beginning with uridine. The polypeptide is tRNA-2-methylthio-N(6)-dimethylallyladenosine synthase (Haemophilus influenzae (strain PittEE)).